A 66-amino-acid chain; its full sequence is Large ribosomal subunit protein bL35 (66 aa).

Belongs to the bacterial ribosomal protein bL35 family.

The sequence is that of Large ribosomal subunit protein bL35 from Treponema denticola (strain ATCC 35405 / DSM 14222 / CIP 103919 / JCM 8153 / KCTC 15104).